A 37-amino-acid polypeptide reads, in one-letter code: Large ribosomal subunit protein bL36 (37 aa).

This sequence belongs to the bacterial ribosomal protein bL36 family.

The sequence is that of Large ribosomal subunit protein bL36 from Shewanella woodyi (strain ATCC 51908 / MS32).